We begin with the raw amino-acid sequence, 628 residues long: Leucine-rich repeat and fibronectin type-III domain-containing protein 3 (628 aa).

A signal peptide spans 1 to 16; that stretch reads MAVLPLLLCLLPLAPA. Topologically, residues 17 to 540 are extracellular; it reads SSPSQPATPS…APHAPFLGGT (524 aa). An LRRNT domain is found at 19–59; it reads PSQPATPSPCPRRCRCQTQSLPLSVLCPGAGLLFVPPSLDR. LRR repeat units follow at residues 84–105, 108–129, 132–153, 157–178, 181–202, and 205–226; these read GLLHLSLSRNTIRHVAAGAFAD, ALRALHLDGNRLTSLGEGQLRG, NLRHLILSNNQLAALAAGALDD, TLEDLDLSYNNLEQLPWEALGR, NVNTLGLDHNLLASVPAGAFSR, and KLARLDMTSNRLTTIPPDPLFS. The LRRCT domain occupies 249-295; it reads NPLHCNCELVWLRRLAREDDLEACASPPALGGRYFWAVGEEEFVCEP. One can recognise an Ig-like domain in the interval 295–382; that stretch reads PPVVTHRSPP…GEATAAVELT (88 aa). Cys-317 and Cys-366 are oxidised to a cystine. Asn-348 and Asn-393 each carry an N-linked (GlcNAc...) asparagine glycan. Residues 380–432 form a disordered region; sequence ELTVGPPPPPQLANSTSCDPPRDGDPDALTPPSAASASAAAKAADTGPPTDRG. Residues 406-429 are compositionally biased toward low complexity; it reads DALTPPSAASASAAAKAADTGPPT. A Fibronectin type-III domain is found at 427–525; that stretch reads PPTDRGVQVT…GCARFSTEPA (99 aa). Residues 541–561 traverse the membrane as a helical segment; sequence MIIALGGVIVASVLVFIFVLL. At 562–628 the chain is on the cytoplasmic side; it reads MRYKVHGGQP…WRPSHEPTGP (67 aa). Residues 587–628 are disordered; the sequence is QTNGSLGPTPAPPAPEPAAPRAHTVVQLDCEPWRPSHEPTGP. Residues 595 to 604 are compositionally biased toward pro residues; it reads TPAPPAPEPA. Residues 617-628 are compositionally biased toward basic and acidic residues; the sequence is EPWRPSHEPTGP.

Belongs to the LRFN family. As to quaternary structure, can form heteromeric complexes with LRFN1, LRFN2, LRFN4 and LRFN5. Able to form homomeric complexes across cell junctions, between adjacent cells. Does not interact with DLG4. Post-translationally, N-glycosylated.

The protein resides in the cell membrane. It is found in the cell projection. It localises to the axon. Its subcellular location is the dendrite. The protein localises to the synapse. The protein resides in the presynaptic cell membrane. It is found in the postsynaptic cell membrane. In terms of biological role, cell adhesion molecule that mediates homophilic cell-cell adhesion in a Ca(2+)-independent manner. Promotes neurite outgrowth in hippocampal neurons. In Ailuropoda melanoleuca (Giant panda), this protein is Leucine-rich repeat and fibronectin type-III domain-containing protein 3 (LRFN3).